Reading from the N-terminus, the 345-residue chain is Phosphoribosylformylglycinamidine cyclo-ligase (345 aa).

Belongs to the AIR synthase family.

The protein localises to the cytoplasm. The catalysed reaction is 2-formamido-N(1)-(5-O-phospho-beta-D-ribosyl)acetamidine + ATP = 5-amino-1-(5-phospho-beta-D-ribosyl)imidazole + ADP + phosphate + H(+). It functions in the pathway purine metabolism; IMP biosynthesis via de novo pathway; 5-amino-1-(5-phospho-D-ribosyl)imidazole from N(2)-formyl-N(1)-(5-phospho-D-ribosyl)glycinamide: step 2/2. The chain is Phosphoribosylformylglycinamidine cyclo-ligase from Ligilactobacillus salivarius (strain UCC118) (Lactobacillus salivarius).